A 659-amino-acid polypeptide reads, in one-letter code: Probable acyl-coenzyme A oxidase acox-1.5 (659 aa).

FAD contacts are provided by residues 148–151, 156–157, and G190; these read YAQT and GT. Substrate contacts are provided by residues 284–287 and R294; that span reads KVGY. Residues R319 and 339–342 each bind FAD; that span reads QQYR. The ATP site is built by H395 and Q403. Residue G410 coordinates FAD. 432–433 lines the substrate pocket; the sequence is YE. The Proton acceptor role is filled by E433. Residue E435 participates in FAD binding. Residue 524-527 participates in ATP binding; sequence KAAR. Positions 657–659 match the Microbody targeting signal motif; it reads SKL.

This sequence belongs to the acyl-CoA oxidase family. Homodimer. FAD serves as cofactor.

The protein resides in the peroxisome. Its pathway is lipid metabolism; peroxisomal fatty acid beta-oxidation. Activated by ATP. ATP binding leads to a conformational change that promotes FAD cofactor binding and enzyme activity. ATP binding likely occurs during acox-1.5 folding and/or dimer formation. Involved in the first step of peroxisomal beta-oxidation by catalyzing the desaturation of fatty acid-derived side chains. The sequence is that of Probable acyl-coenzyme A oxidase acox-1.5 from Caenorhabditis elegans.